A 426-amino-acid polypeptide reads, in one-letter code: Large envelope protein (426 aa).

Glycine 2 carries N-myristoyl glycine; by host lipidation. The segment at 2-143 (GNNIKVTFNP…PPLRDTHPHL (142 aa)) is pre-S1. The tract at residues 2–202 (GNNIKVTFNP…PSTTGDPAQS (201 aa)) is pre-S. The Virion surface; in external conformation segment spans residues 2–209 (GNNIKVTFNP…AQSPEMSPSS (208 aa)). Residues 2–281 (GNNIKVTFNP…NGFRWMYLRR (280 aa)) are Intravirion; in internal conformation-facing. A glycan (N-linked (GlcNAc...) asparagine) is linked at asparagine 3. Residues 107–142 (IRDIPRGLVPPQTPTNRDQGRKPTPPTPPLRDTHPH) are disordered. The tract at residues 144 to 202 (TMKNQTFHLQGFVDGLRDLTTTERQHNAYGDPFTTLSPVVPTVSTILSPPSTTGDPAQS) is pre-S2. A helical membrane pass occupies residues 210–230 (LLGLLAGLQVVYFLWTKILTI). The Intravirion; in external conformation segment spans residues 231–281 (AQNLDWWWTSLSFPGGIPECTGQNSQFQTCKHLPTSCPPTCNGFRWMYLRR). Residues 282 to 302 (FIIYLLVLLLCLIFLLVLLDW) form a helical membrane-spanning segment. Residues 303 to 374 (KGLIPVCPIQ…WALARFSWLN (72 aa)) are Virion surface-facing. Asparagine 346 carries an N-linked (GlcNAc...) asparagine; by host glycan. The helical transmembrane segment at 375–395 (LLVPLLQWLGGISLIAWFLLI) threads the bilayer. The Intravirion segment spans residues 396 to 401 (WMIWFW). The helical transmembrane segment at 402–424 (GPALLSILPPFIPIFVLFFLIWV) threads the bilayer. At 425-426 (YI) the chain is on the virion surface side.

The protein belongs to the orthohepadnavirus major surface antigen family. As to quaternary structure, in its internal form (Li-HBsAg), interacts with the capsid protein and with the isoform S. Interacts with host chaperone CANX. In terms of assembly, associates with host chaperone CANX through its pre-S2 N glycan; this association may be essential for isoform M proper secretion. Interacts with isoform L. Interacts with the antigens of satellite virus HDV (HDVAgs); this interaction is required for encapsidation of HDV genomic RNA. Post-translationally, isoform M is N-terminally acetylated by host at a ratio of 90%, and N-glycosylated by host at the pre-S2 region. Myristoylated.

The protein localises to the virion membrane. Its function is as follows. The large envelope protein exists in two topological conformations, one which is termed 'external' or Le-HBsAg and the other 'internal' or Li-HBsAg. In its external conformation the protein attaches the virus to cell receptors and thereby initiating infection. This interaction determines the species specificity and liver tropism. This attachment induces virion internalization predominantly through caveolin-mediated endocytosis. The large envelope protein also assures fusion between virion membrane and endosomal membrane. In its internal conformation the protein plays a role in virion morphogenesis and mediates the contact with the nucleocapsid like a matrix protein. The middle envelope protein plays an important role in the budding of the virion. It is involved in the induction of budding in a nucleocapsid independent way. In this process the majority of envelope proteins bud to form subviral lipoprotein particles of 22 nm of diameter that do not contain a nucleocapsid. In Marmota monax (Woodchuck), this protein is Large envelope protein.